The primary structure comprises 780 residues: MSQVIQGAVEEPVYSNKSLTNENDSFLSLIESFSQERGVPIDINPKIGRKPILLYELYKKVIKRGGYDAVSATEDGWTNIAEEFNQSDPARSAGILQNVYFKYLISWEIHDHWHLLLPPPSTLELSENRQNVLERVKVFNSCSPPKPTNPITIIDNDKTHSFKKFYKSLVKEDEENGIEKKINEAMNSSASQPLPNSTNFASTTFPSVPFHPLPVDSGLQKYIDRNSNLTPPALGAGVPGPPLLVRVALALKSQQDKEVDWAIGHLIKISFERHQEFKLERLPSLAECLVYSLGFQVTKAKQVSDLTDISLCMDRAIGIALVLRNSVLSVENAKHVAQTKLVISVLEASIRCAKTFNNLEFLHYCLDISEMISSYLHVEDEKNVFYLALCEFLNSSDYSILIATLRTLARLALNDRNNRLLQDLKSNVIANIIALVETDNEEIVAAALDFLYQYTTYRTNTSNLLASQEAWMLVDQLIRLMMYQAQERFMTVTIENSESNPAVKHEATSSISLPMEELQQLVAMREPERSVKWMRCCFEPSSDDYVLQTDIWQLYCSDMERAQGPNVMGISPADFIKVSSHAFYNARAMTVSTPQLPVEYVINGIKRRKFPTSVNGMRYQPCRWCLDSGKECGELLLGTPLLHSHLQEMHIFPQILETGKCRWSDCKYEIQRLTPASELSHYQLLSHIVTHLHDDSLETLVEGRKLSPSREFRIPLLLTAVDDQGDATGIALTATLVLRNLVRSKQGKMLFSAIESRVLEVSSLNPAVAPYVSEMLLGQI.

The region spanning 20-112 is the ARID domain; that stretch reads TNENDSFLSL…YLISWEIHDH (93 aa). Threonine 230 carries the post-translational modification Phosphothreonine. Positions 530–609 form a DNA-binding region, RFX-type winged-helix; the sequence is SVKWMRCCFE…YVINGIKRRK (80 aa). Residue serine 696 is modified to Phosphoserine.

It belongs to the RSC9 family. Component of the RSC complex composed of at least arp9, arp42, rsc1, rsc4, rsc7, rsc9, rsc58, sfh1, snf21, ssr1, ssr2, ssr3 and ssr4. The complex interacts with histone and histone variant components of centromeric chromatin.

Its subcellular location is the cytoplasm. The protein localises to the nucleus. Component of the chromatin structure remodeling complex (RSC), which is involved in transcription regulation and nucleosome positioning. Controls particularly membrane and organelle development genes. The sequence is that of Chromatin structure-remodeling complex subunit rsc9 (rsc9) from Schizosaccharomyces pombe (strain 972 / ATCC 24843) (Fission yeast).